The primary structure comprises 318 residues: Protein FdhE homolog (318 aa).

This sequence belongs to the FdhE family.

It localises to the cytoplasm. Necessary for formate dehydrogenase activity. This Pseudomonas putida (strain ATCC 47054 / DSM 6125 / CFBP 8728 / NCIMB 11950 / KT2440) protein is Protein FdhE homolog.